Consider the following 309-residue polypeptide: Homoserine O-succinyltransferase (309 aa).

Catalysis depends on C142, which acts as the Acyl-thioester intermediate. Residues K163 and S192 each contribute to the substrate site. The active-site Proton acceptor is H235. Residue E237 is part of the active site. R249 serves as a coordination point for substrate.

It belongs to the MetA family.

The protein localises to the cytoplasm. It catalyses the reaction L-homoserine + succinyl-CoA = O-succinyl-L-homoserine + CoA. It functions in the pathway amino-acid biosynthesis; L-methionine biosynthesis via de novo pathway; O-succinyl-L-homoserine from L-homoserine: step 1/1. In terms of biological role, transfers a succinyl group from succinyl-CoA to L-homoserine, forming succinyl-L-homoserine. The chain is Homoserine O-succinyltransferase from Yersinia pseudotuberculosis serotype O:1b (strain IP 31758).